We begin with the raw amino-acid sequence, 511 residues long: 2,3-bisphosphoglycerate-independent phosphoglycerate mutase (511 aa).

Aspartate 12 provides a ligand contact to Mn(2+). Tyrosine 36 bears the Phosphotyrosine mark. Serine 62 is a Mn(2+) binding site. Serine 62 serves as the catalytic Phosphoserine intermediate. Residues histidine 123, 153-154, arginine 185, arginine 191, 261-264, and lysine 336 each bind substrate; these read RD and RPDR. Positions 403, 407, 444, 445, and 462 each coordinate Mn(2+).

The protein belongs to the BPG-independent phosphoglycerate mutase family. As to quaternary structure, monomer. It depends on Mn(2+) as a cofactor.

It carries out the reaction (2R)-2-phosphoglycerate = (2R)-3-phosphoglycerate. It functions in the pathway carbohydrate degradation; glycolysis; pyruvate from D-glyceraldehyde 3-phosphate: step 3/5. Functionally, essential for rapid growth and for sporulation. Catalyzes the interconversion of 2-phosphoglycerate and 3-phosphoglycerate. This Bacillus licheniformis (strain ATCC 14580 / DSM 13 / JCM 2505 / CCUG 7422 / NBRC 12200 / NCIMB 9375 / NCTC 10341 / NRRL NRS-1264 / Gibson 46) protein is 2,3-bisphosphoglycerate-independent phosphoglycerate mutase.